The sequence spans 66 residues: UPF0457 protein BA_2525/GBAA_2525/BAS2348 (66 aa).

Belongs to the UPF0457 family.

The protein is UPF0457 protein BA_2525/GBAA_2525/BAS2348 of Bacillus anthracis.